A 400-amino-acid polypeptide reads, in one-letter code: Elongation factor Tu (400 aa).

A tr-type G domain is found at 10-210 (KPHCNVGTIG…VDTYIPIPPR (201 aa)). A G1 region spans residues 19 to 26 (GHVDHGKT). Residue 19 to 26 (GHVDHGKT) participates in GTP binding. A Mg(2+)-binding site is contributed by T26. The tract at residues 60–64 (GLTIA) is G2. Residues 81–84 (DCPG) form a G3 region. Residues 81-85 (DCPGH) and 136-139 (NKCD) contribute to the GTP site. Positions 136 to 139 (NKCD) are G4. The interval 174–176 (SAI) is G5.

This sequence belongs to the TRAFAC class translation factor GTPase superfamily. Classic translation factor GTPase family. EF-Tu/EF-1A subfamily. In terms of assembly, monomer.

It is found in the cytoplasm. It carries out the reaction GTP + H2O = GDP + phosphate + H(+). GTP hydrolase that promotes the GTP-dependent binding of aminoacyl-tRNA to the A-site of ribosomes during protein biosynthesis. The chain is Elongation factor Tu from Dehalococcoides mccartyi (strain CBDB1).